We begin with the raw amino-acid sequence, 366 residues long: MLWKNYVLSSSRITRRLHKSPRKSSFSKNFFITGCLLTVGAVSSYLTYRYTSERENKHELSPSYFVKYKISHKRDIDSSHFLLEVTPLFKQKVNIWSLMTAENLWSVEIKQPEVMVVRNYTPLPLKFNPASKEIEILKDGDNADGKLSFYIKKYENGEVARWLHHLPKGHIIEIRGPFIDYEFPHLPNELKRSRDCLYMDNRNERGNNVRENSQFIYQPYDIMMFTAGTGIVTALQLLLTESPFRGTIKLFHTDKNIKQLGPLYPILLRLQASNRVQLKIFETDRQTKQDVLKSIQKSITKPYPYKGLLPFSNVNNKNIMPVLALVCGPESYISSISGRKYDLNQGPVGGLLSKEGWNSDNVYKLS.

The N-terminal 50 residues, 1 to 50 (MLWKNYVLSSSRITRRLHKSPRKSSFSKNFFITGCLLTVGAVSSYLTYRY), are a transit peptide targeting the mitochondrion. The FAD-binding FR-type domain occupies 63–184 (SYFVKYKISH…RGPFIDYEFP (122 aa)).

Requires FAD as cofactor.

The protein resides in the mitochondrion inner membrane. Its function is as follows. Redox component that participates in c-type cytochrome biogenesis in the mitochondrial intermembrane space. May play a role in the reduction of heme prior to its ligation to apocytochrome c by cytochrome c heme lyase. Has oxidoreductase activity in vitro. The polypeptide is Cytochrome c mitochondrial import factor CYC2 (CYC2) (Saccharomyces cerevisiae (strain ATCC 204508 / S288c) (Baker's yeast)).